The sequence spans 324 residues: Glyceraldehyde-3-phosphate dehydrogenase 1 (324 aa).

Residues 13–14, D35, and K85 contribute to the NAD(+) site; that span reads RI. D-glyceraldehyde 3-phosphate is bound by residues 157 to 159, T188, 217 to 218, and R240; these read SCT and TG. C158 serves as the catalytic Nucleophile. Residue N322 coordinates NAD(+).

Belongs to the glyceraldehyde-3-phosphate dehydrogenase family. Homotetramer.

The protein localises to the cytoplasm. It carries out the reaction D-glyceraldehyde 3-phosphate + phosphate + NAD(+) = (2R)-3-phospho-glyceroyl phosphate + NADH + H(+). It functions in the pathway carbohydrate degradation; glycolysis; pyruvate from D-glyceraldehyde 3-phosphate: step 1/5. In Globodera rostochiensis (Golden nematode worm), this protein is Glyceraldehyde-3-phosphate dehydrogenase 1 (GPD-1).